A 239-amino-acid chain; its full sequence is LRRN4 C-terminal-like protein (239 aa).

An N-terminal signal peptide occupies residues methionine 1–serine 19. Topologically, residues glutamine 20 to threonine 194 are extracellular. One can recognise a Fibronectin type-III domain in the interval glutamine 82–serine 179. N-linked (GlcNAc...) asparagine glycans are attached at residues asparagine 132 and asparagine 174. The helical transmembrane segment at leucine 195–valine 215 threads the bilayer. The Cytoplasmic segment spans residues tryptophan 216–leucine 239.

The protein resides in the membrane. This is LRRN4 C-terminal-like protein (Lrrn4cl) from Mus musculus (Mouse).